Here is a 282-residue protein sequence, read N- to C-terminus: F-actin-capping protein subunit alpha (282 aa).

Belongs to the F-actin-capping protein alpha subunit family. Component of the F-actin capping complex, composed of a heterodimer of an alpha and a beta subunit.

It is found in the cytoplasm. Its subcellular location is the cytoskeleton. Functionally, F-actin-capping proteins bind in a Ca(2+)-independent manner to the fast growing ends of actin filaments (barbed end) thereby blocking the exchange of subunits at these ends. Unlike other capping proteins (such as gelsolin and severin), these proteins do not sever actin filaments. The protein is F-actin-capping protein subunit alpha (cap-1) of Caenorhabditis elegans.